The following is an 801-amino-acid chain: H(+)/Cl(-) exchange transporter 3 (801 aa).

The Cytoplasmic portion of the chain corresponds to 1 to 125 (MESEQLFHRG…WEMTKSLYDA (125 aa)). 3 consecutive short sequence motifs (di-leucine internalization motif; mediates targeting to late endosome and lysosome membranes) follow at residues 28-29 (LL), 46-47 (LL), and 71-75 (LLDLL). A helical membrane pass occupies residues 126–163 (WSGWLVVTLTGLASGALAGLIDIAADWMTDLKEGICLS). Asn-177 is a glycosylation site (N-linked (GlcNAc...) asparagine). Residues 209 to 232 (MNYIMYIFWALSFAFLAVSLVKVF) form a helical membrane-spanning segment. Residues 238-242 (GSGIP) carry the Selectivity filter part_1 motif. A chloride-binding site is contributed by Ser-239. Residues 241 to 248 (IPEIKTIL) constitute an intramembrane region (helical). 2 helical membrane-spanning segments follow: residues 258–276 (GKWT…VASG) and 282–301 (EGPL…YLFP). The Selectivity filter part_2 signature appears at 280–284 (GKEGP). 2 consecutive intramembrane regions (helical) follow at residues 313 to 325 (VLSA…VSVA) and 329 to 337 (PIGGVLFSL). The next 3 helical transmembrane spans lie at 349 to 367 (LWRS…RSIN), 391 to 416 (FPFI…AWCR), and 423 to 443 (FGKY…VIAF). Asn-451 and Asn-479 each carry an N-linked (GlcNAc...) asparagine glycan. Residues 500-520 (IWQLCLALIFKIIMTVFTFGI) form a helical membrane-spanning segment. The Selectivity filter part_3 signature appears at 525-529 (GLFIP). Phe-527 lines the chloride pocket. Intramembrane regions (helical) lie at residues 555 to 569 (GLYA…LGGV) and 573 to 584 (TVSLVVIVFELT). Positions 585-588 (GGLE) form an intramembrane region, note=Loop between two helices. Residues 589–607 (YIVPLMAAVMTSKWVGDAF) traverse the membrane as a helical segment. Over 608 to 801 (GREGIYEAHI…NQDPASIMFN (194 aa)) the chain is Cytoplasmic. Residue Tyr-613 participates in chloride binding. 2 CBS domains span residues 641–705 (MRPR…ARKK) and 738–795 (LDMS…NQDP). ATP-binding positions include 672–674 (YNG) and 779–782 (TKKD).

This sequence belongs to the chloride channel (TC 2.A.49) family. ClC-3/CLCN3 subfamily. As to quaternary structure, monomer and homodimer. Forms heterodimers with CLCN4. N-glycosylated.

It localises to the early endosome membrane. The protein resides in the late endosome membrane. It is found in the lysosome membrane. The protein localises to the cell membrane. Functionally, strongly outwardly rectifying, electrogenic H(+)/Cl(-)exchanger which mediates the exchange of chloride ions against protons. The CLC channel family contains both chloride channels and proton-coupled anion transporters that exchange chloride or another anion for protons. The presence of conserved gating glutamate residues is typical for family members that function as antiporters. In Pongo abelii (Sumatran orangutan), this protein is H(+)/Cl(-) exchange transporter 3 (CLCN3).